Here is a 414-residue protein sequence, read N- to C-terminus: Glucose-6-phosphate isomerase (414 aa).

E266 functions as the Proton donor in the catalytic mechanism. Residues H292 and K405 contribute to the active site.

It belongs to the GPI family.

Its subcellular location is the cytoplasm. It carries out the reaction alpha-D-glucose 6-phosphate = beta-D-fructose 6-phosphate. It functions in the pathway carbohydrate biosynthesis; gluconeogenesis. The protein operates within carbohydrate degradation; glycolysis; D-glyceraldehyde 3-phosphate and glycerone phosphate from D-glucose: step 2/4. In terms of biological role, catalyzes the reversible isomerization of glucose-6-phosphate to fructose-6-phosphate. This Thermus thermophilus (strain ATCC BAA-163 / DSM 7039 / HB27) protein is Glucose-6-phosphate isomerase.